The following is a 277-amino-acid chain: Carbonyl reductase [NADPH] 3 (277 aa).

Serine 2 bears the N-acetylserine mark. Residues 10–34, 38–42, 63–64, and asparagine 90 contribute to the NADP(+) site; these read VTGA…GDVV, RDVAR, and DI. Serine 30 bears the Phosphoserine mark. Serine 140 contacts substrate. Residue tyrosine 194 is the Proton acceptor of the active site. NADP(+) is bound by residues 194-198 and aspartate 239; that span reads YGVSK.

Belongs to the short-chain dehydrogenases/reductases (SDR) family. Detected in ovary, pancreas, intestine, colon, kidney, brain, thymus, lung, heart, liver, spleen, leukocyte, prostate and testis.

Its subcellular location is the cytoplasm. It carries out the reaction a secondary alcohol + NADP(+) = a ketone + NADPH + H(+). The catalysed reaction is a quinone + NADPH + H(+) = a quinol + NADP(+). Functionally, catalyzes the NADPH-dependent reduction of carbonyl compounds to their corresponding alcohols. Has low NADPH-dependent oxidoreductase activity. Acts on several orthoquinones, acts as well on non-quinone compounds, such as isatin or on the anticancer drug oracin. Best substrates for CBR3 is 1,2- naphthoquinone, hence could play a role in protection against cytotoxicity of exogenous quinones. Exerts activity toward ortho-quinones but not paraquinones. No endogenous substrate for CBR3 except isatin has been identified. In Homo sapiens (Human), this protein is Carbonyl reductase [NADPH] 3.